A 420-amino-acid chain; its full sequence is ATP phosphoribosyltransferase regulatory subunit (420 aa).

It belongs to the class-II aminoacyl-tRNA synthetase family. HisZ subfamily. As to quaternary structure, heteromultimer composed of HisG and HisZ subunits.

It localises to the cytoplasm. It participates in amino-acid biosynthesis; L-histidine biosynthesis; L-histidine from 5-phospho-alpha-D-ribose 1-diphosphate: step 1/9. In terms of biological role, required for the first step of histidine biosynthesis. May allow the feedback regulation of ATP phosphoribosyltransferase activity by histidine. The protein is ATP phosphoribosyltransferase regulatory subunit of Bacillus thuringiensis (strain Al Hakam).